Here is a 63-residue protein sequence, read N- to C-terminus: uncharacterized protein (63 aa).

Positions 1–18 are cleaved as a signal peptide; sequence MLNSEHFNLIQRALDATA.

This is an uncharacterized protein from Bacillus subtilis (strain 168).